Here is a 420-residue protein sequence, read N- to C-terminus: Anaerobic glycerol-3-phosphate dehydrogenase subunit B (420 aa).

Belongs to the anaerobic G-3-P dehydrogenase subunit B family. Composed of a catalytic GlpA/B dimer and of membrane bound GlpC. FMN serves as cofactor.

The catalysed reaction is a quinone + sn-glycerol 3-phosphate = dihydroxyacetone phosphate + a quinol. It participates in polyol metabolism; glycerol degradation via glycerol kinase pathway; glycerone phosphate from sn-glycerol 3-phosphate (anaerobic route): step 1/1. Conversion of glycerol 3-phosphate to dihydroxyacetone. Uses fumarate or nitrate as electron acceptor. The protein is Anaerobic glycerol-3-phosphate dehydrogenase subunit B of Pectobacterium carotovorum subsp. carotovorum (strain PC1).